The chain runs to 2481 residues: Serine/threonine-protein kinase TOR (2481 aa).

The disordered stretch occupies residues 1–31 (MSTSSQSFVAGRPASMASPSQSHRFCGPSAT). HEAT repeat units follow at residues 205 to 242 (VHVP…VIEK), 292 to 329 (SRYR…FLRD), 373 to 410 (HYLP…AMGS), 434 to 471 (DALD…SQAK), 569 to 607 (RLVE…FDDY), 608 to 645 (LAQA…KNPA), 737 to 775 (QYIP…STGY), and 781 to 819 (KEYP…LDPH). The interval 823 to 847 (RNQQSLSGSHGEVPRGTGDSGQPIP) is disordered. 6 HEAT repeats span residues 866-904 (YYST…SMGL), 908-945 (PYLP…IVRQ), 952-992 (PELL…ALND), 996-1036 (TYLP…GTLD), 1037-1075 (EHMH…CVQV), and 1077-1114 (GHIS…ALGE). The segment at 1179–1204 (DPFEEGTDRNHQVNDGRLRTAGEASQ) is disordered. Residues 1184-1198 (GTDRNHQVNDGRLRT) are compositionally biased toward basic and acidic residues. Residues 1309–1887 (LLGALAEKCR…MYPLLVACKS (579 aa)) enclose the FAT domain. 2 consecutive short sequence motifs (nuclear localization signal) follow at residues 1505–1512 (VRRAKYDE) and 2075–2080 (KQRPRK). One can recognise a PI3K/PI4K catalytic domain in the interval 2065–2378 (FSRQLVVITS…DEDPADIDLP (314 aa)). The interval 2071–2077 (VITSKQR) is G-loop. The tract at residues 2244–2252 (GLGDRHPSN) is catalytic loop. The tract at residues 2264 to 2289 (HIDFGDCFEASMNREKFPEKVPFRLT) is activation loop. The interval 2354-2384 (NNNPNAPADVEPDEEDEDPADIDLPQPQRST) is disordered. The segment covering 2363 to 2374 (VEPDEEDEDPAD) has biased composition (acidic residues). A Phosphoserine modification is found at serine 2424. An FATC domain is found at 2449 to 2481 (HGLSVKVQVQKLINQATSHENLCQNYVGWCPFW).

The protein belongs to the PI3/PI4-kinase family. Interacts with RAPTOR1 and itself. Interacts with FKBP12 in a rapamycin-dependent manner. Binds to LST8-1. Hyperactivated upon interaction with cauliflower mosaic virus (CaMV) Tav protein. Activated by phosphorylation on Ser-2424 triggered by cauliflower mosaic virus P6 and auxin. Highly expressed in root meristems, shoot apical meristem (SAM) and floral buds.

It is found in the cytoplasm. The protein resides in the nucleus. The enzyme catalyses L-seryl-[protein] + ATP = O-phospho-L-seryl-[protein] + ADP + H(+). It catalyses the reaction L-threonyl-[protein] + ATP = O-phospho-L-threonyl-[protein] + ADP + H(+). Its activity is regulated as follows. Almost insensitive to rapamycin. Strongly repressed by specific active site inhibitors (asTORis) such as AZD-8055, TORIN2 and WYE-132, and, to a lesser extent, by KU63794, WYE-354 and TORIN1, leading to impaired photoautotrophic growth and abnormally early meristematic cells differentiation. Repression by TORIN1 leads to impaired responses to auxin, including gravitropism. Combined treatment with rapamycin and active-site inhibitors (e.g. Torin1 and AZD-8055) results in synergistic inhibition of activity and plant growth. Inhibition by KU63794 leads to reduced auxin content in root tips. AZD-8055 treatment reduces abscisic acid (ABA) levels. In addition, inhibition by AZD-8055 leads to a strong reduction of watermelon mosaic virus (WMV) infection. Essential cell growth regulator that controls development from early embryo to seed production. Controls plant growth in environmental stress conditions. Acts through the phosphorylation of downstream effectors that are recruited by the binding partner RAPTOR. Acts by activating transcription, protein synthesis and ribosome biogenesis, and inhibiting mRNA degradation and autophagy. Can phosphorylate TAP46, a regulatory subunit of protein phosphatase 2A that modulates cell growth and survival. Involved in modulating the transition from heterotrophic to photoautotrophic growth by regulating the expression of chloroplast- and photosynthesis-associated genes. Essential for auxin signaling transduction, probably acting in polysomes to maintain the active ATPK1/S6K1 (and thus TIF3H1/eIF3h) phosphorylation status that is critical for translation reinitiation (e.g. uORF-mRNAs loading). Promotes abscisic acid (ABA) biosynthesis. Involved in the regulation of sugar-mediated (e.g. glucose and sucrose) glycolysis- and mitochondrial bioenergetics-dependent root growth promotion. Required for sugar (e.g. glucose) promotion of hypocotyl elongation in the dark, by activating the brassinosteroid pathway and stabilizing BZR1. The regulation of BZR1 degradation is dependent on autophagy. Regulates the expression, phosphorylation and ribosome association of MRFs (e.g. MRF1, MRF3 and MRF4), especially under energy-deficient conditions. Its function is as follows. (Microbial infection) Binding to cauliflower mosaic virus (CaMV) Tav protein is critical for both translation reinitiation and viral fitness. When activated by CaMV P6, promotes CaMV translation by inhibiting cellular autophagy and suppressing both silencing and innate immunity, thus conferring sensitivity to P.syringae. In terms of biological role, (Microbial infection) Required during infection by some potyvirus such as Watermelon mosaic virus (WMV) but not for turnip mosaic virus (TuMV). The sequence is that of Serine/threonine-protein kinase TOR from Arabidopsis thaliana (Mouse-ear cress).